The primary structure comprises 350 residues: MVNVSITTDYSRMLFMRNTTSTLKIAIIGYGSQGRAHALNLRDSGFDIIIGLRPGGPTEAKAQADGFTVQSPDQAAKHADLVAVLTPDMVQKKLYEEVLAPNIKQGACLLFAHGLNVHYGMITPRSDLDVVLVAPKGPGALVRREYEIGRGVPCIYAVHQDLSSHAEQLALTYAGGLGGARANIIKTTFKEETETDLFGEQAVLCGGVSSLVQAGFETLVEAGYQPEIAYYEVLHELKLIVDLFYEGGITRMLEFVSETAQYGDYVSGPRVIDGSTKERMKAVLKDIQDGTFTKHWIAEYQAGLPNYKKYKQADLEHPIEKVGKQLRAKMVWLNSEKTNDTTPPMSSKVV.

Positions 4–187 (VSITTDYSRM…GGARANIIKT (184 aa)) constitute a KARI N-terminal Rossmann domain. Residues 30 to 33 (YGSQ), Arg-53, Thr-58, and 88 to 91 (DMVQ) contribute to the NADP(+) site. His-113 is an active-site residue. Position 139 (Gly-139) interacts with NADP(+). Residues 188 to 333 (TFKEETETDL…KQLRAKMVWL (146 aa)) enclose the KARI C-terminal knotted domain. Positions 196, 200, 232, and 236 each coordinate Mg(2+). Ser-257 provides a ligand contact to substrate.

Belongs to the ketol-acid reductoisomerase family. Mg(2+) serves as cofactor.

It carries out the reaction (2R)-2,3-dihydroxy-3-methylbutanoate + NADP(+) = (2S)-2-acetolactate + NADPH + H(+). The enzyme catalyses (2R,3R)-2,3-dihydroxy-3-methylpentanoate + NADP(+) = (S)-2-ethyl-2-hydroxy-3-oxobutanoate + NADPH + H(+). Its pathway is amino-acid biosynthesis; L-isoleucine biosynthesis; L-isoleucine from 2-oxobutanoate: step 2/4. It functions in the pathway amino-acid biosynthesis; L-valine biosynthesis; L-valine from pyruvate: step 2/4. In terms of biological role, involved in the biosynthesis of branched-chain amino acids (BCAA). Catalyzes an alkyl-migration followed by a ketol-acid reduction of (S)-2-acetolactate (S2AL) to yield (R)-2,3-dihydroxy-isovalerate. In the isomerase reaction, S2AL is rearranged via a Mg-dependent methyl migration to produce 3-hydroxy-3-methyl-2-ketobutyrate (HMKB). In the reductase reaction, this 2-ketoacid undergoes a metal-dependent reduction by NADPH to yield (R)-2,3-dihydroxy-isovalerate. The sequence is that of Ketol-acid reductoisomerase (NADP(+)) from Xylella fastidiosa (strain 9a5c).